The sequence spans 126 residues: C-type natriuretic peptide (126 aa).

The N-terminal stretch at 1 to 23 (MHLSQLIACALLLALLSLRPSEA) is a signal peptide. Residues 20-73 (PSEAKPGTPPKVPRTPPGEELADSQAAGGNQKKGDKTPGSGGANLKGDRSRLLR) are disordered. A propeptide spanning residues 24-73 (KPGTPPKVPRTPPGEELADSQAAGGNQKKGDKTPGSGGANLKGDRSRLLR) is cleaved from the precursor. Positions 26–35 (GTPPKVPRTP) are enriched in pro residues. Cysteines 110 and 126 form a disulfide.

Belongs to the natriuretic peptide family. Degraded by IDE (in vitro).

Its subcellular location is the secreted. Hormone which plays a role in endochondral ossification through regulation of cartilaginous growth plate chondrocytes proliferation and differentiation. May also be vasoactive and natriuretic. Acts by specifically binding and stimulating NPR2 to produce cGMP. Binds the clearance receptor NPR3. The polypeptide is C-type natriuretic peptide (Nppc) (Mus musculus (Mouse)).